The primary structure comprises 243 residues: Probable transcriptional regulator ycf27 (243 aa).

In terms of domain architecture, Response regulatory spans 7–120 (KILVVDDEAS…ELEARIRSVL (114 aa)). At aspartate 56 the chain carries 4-aspartylphosphate. A DNA-binding region (H-T-H motif) is located at residues 76-94 (DVPIIMLTALGEVCDRITG). Residues 135-236 (SGIISIGFLK…ARGTGYLFQR (102 aa)) constitute a DNA-binding region (ompR/PhoB-type).

The protein resides in the plastid. It localises to the chloroplast. In terms of biological role, probable promoter-specific protein mediating the interaction between DNA and RNA polymerase. The chain is Probable transcriptional regulator ycf27 (ycf27) from Porphyra purpurea (Red seaweed).